The primary structure comprises 187 residues: uncharacterized protein (187 aa).

The disordered stretch occupies residues 131-187 (VAEKKDQRKKKPKVKTQGENAPVAKSAGENSGKLEEQKDERKGIAKDIDDFFGGIDG). Positions 162 to 179 (GKLEEQKDERKGIAKDID) are enriched in basic and acidic residues.

This is an uncharacterized protein from Haemophilus influenzae (Bacteriophage HP1).